Reading from the N-terminus, the 141-residue chain is Putative ankyrin repeat protein FPV223 (141 aa).

ANK repeat units lie at residues 21–50 (SGRTSLHYAVLFNHKRALSFLLARGADVFK), 54–83 (CMCTPLYYAMLSDQRDMVTMLLHSKKYIVK), 85–114 (RNKLDLHNAIETGNIKVIKTLLDNGVNENS), and 118–140 (DGLTPLHYAVKYGNISIVKMFVI).

This Vertebrata (FPV) protein is Putative ankyrin repeat protein FPV223.